We begin with the raw amino-acid sequence, 76 residues long: ATP synthase subunit 9, mitochondrial (76 aa).

2 helical membrane-spanning segments follow: residues 14–34 (IATI…AALI) and 52–72 (ILGF…SFLL).

It belongs to the ATPase C chain family. As to quaternary structure, F-type ATPases have 2 components, CF(1) - the catalytic core - and CF(0) - the membrane proton channel. CF(1) has five subunits: alpha(3), beta(3), gamma(1), delta(1), epsilon(1). CF(0) has three main subunits: a, b and c.

It is found in the mitochondrion membrane. In terms of biological role, mitochondrial membrane ATP synthase (F(1)F(0) ATP synthase or Complex V) produces ATP from ADP in the presence of a proton gradient across the membrane which is generated by electron transport complexes of the respiratory chain. F-type ATPases consist of two structural domains, F(1) - containing the extramembraneous catalytic core and F(0) - containing the membrane proton channel, linked together by a central stalk and a peripheral stalk. During catalysis, ATP synthesis in the catalytic domain of F(1) is coupled via a rotary mechanism of the central stalk subunits to proton translocation. Part of the complex F(0) domain. A homomeric c-ring of probably 10 subunits is part of the complex rotary element. This is ATP synthase subunit 9, mitochondrial (ATP9) from Wickerhamomyces canadensis (Yeast).